The chain runs to 240 residues: 2,3-bisphosphoglycerate-dependent phosphoglycerate mutase 2 (240 aa).

Residues 8 to 15 (RHGQSEWN), 21 to 22 (TG), R60, 87 to 90 (ERHY), K98, 114 to 115 (RR), and 183 to 184 (GN) each bind substrate. The active-site Tele-phosphohistidine intermediate is H9. Residue E87 is the Proton donor/acceptor of the active site.

Belongs to the phosphoglycerate mutase family. BPG-dependent PGAM subfamily.

The enzyme catalyses (2R)-2-phosphoglycerate = (2R)-3-phosphoglycerate. It functions in the pathway carbohydrate degradation; glycolysis; pyruvate from D-glyceraldehyde 3-phosphate: step 3/5. Functionally, catalyzes the interconversion of 2-phosphoglycerate and 3-phosphoglycerate. The polypeptide is 2,3-bisphosphoglycerate-dependent phosphoglycerate mutase 2 (Bacillus cereus (strain ATCC 10987 / NRS 248)).